Consider the following 250-residue polypeptide: L-ascorbate peroxidase, cytosolic (250 aa).

Catalysis depends on histidine 42, which acts as the Proton acceptor. The disordered stretch occupies residues 113-137 (VPFHPGREDKPEPPPEGRLPDATKG). Residues 117–137 (PGREDKPEPPPEGRLPDATKG) show a composition bias toward basic and acidic residues. Histidine 163 is a binding site for heme b. The K(+) site is built by threonine 164, threonine 180, asparagine 182, isoleucine 185, and aspartate 187.

It belongs to the peroxidase family. Ascorbate peroxidase subfamily. Heme b is required as a cofactor.

The protein localises to the cytoplasm. It carries out the reaction L-ascorbate + H2O2 = L-dehydroascorbate + 2 H2O. Its function is as follows. Plays a key role in hydrogen peroxide removal. This chain is L-ascorbate peroxidase, cytosolic (APX1), found in Pisum sativum (Garden pea).